The following is a 212-amino-acid chain: Thymidylate kinase (212 aa).

Residue 11–18 (GLEGAGKT) participates in ATP binding.

This sequence belongs to the thymidylate kinase family.

It carries out the reaction dTMP + ATP = dTDP + ADP. Phosphorylation of dTMP to form dTDP in both de novo and salvage pathways of dTTP synthesis. This chain is Thymidylate kinase (tmk), found in Buchnera aphidicola subsp. Acyrthosiphon pisum (strain APS) (Acyrthosiphon pisum symbiotic bacterium).